Reading from the N-terminus, the 80-residue chain is RNA-binding protein Hfq (80 aa).

Positions Glu-9–Val-68 constitute a Sm domain.

The protein belongs to the Hfq family. Homohexamer.

In terms of biological role, RNA chaperone that binds small regulatory RNA (sRNAs) and mRNAs to facilitate mRNA translational regulation in response to envelope stress, environmental stress and changes in metabolite concentrations. Also binds with high specificity to tRNAs. The sequence is that of RNA-binding protein Hfq from Thioalkalivibrio sulfidiphilus (strain HL-EbGR7).